Here is a 162-residue protein sequence, read N- to C-terminus: Nucleotide-binding protein CMM_2802 (162 aa).

This sequence belongs to the YajQ family.

Its function is as follows. Nucleotide-binding protein. This Clavibacter michiganensis subsp. michiganensis (strain NCPPB 382) protein is Nucleotide-binding protein CMM_2802.